Reading from the N-terminus, the 312-residue chain is DNA-directed RNA polymerase subunit alpha (312 aa).

The interval 1-226 (MIEFKKPNIT…EHFKAFESAD (226 aa)) is alpha N-terminal domain (alpha-NTD). The segment at 243–312 (KEKKLEMTIE…DLGLSLRQED (70 aa)) is alpha C-terminal domain (alpha-CTD).

It belongs to the RNA polymerase alpha chain family. In terms of assembly, homodimer. The RNAP catalytic core consists of 2 alpha, 1 beta, 1 beta' and 1 omega subunit. When a sigma factor is associated with the core the holoenzyme is formed, which can initiate transcription.

It carries out the reaction RNA(n) + a ribonucleoside 5'-triphosphate = RNA(n+1) + diphosphate. DNA-dependent RNA polymerase catalyzes the transcription of DNA into RNA using the four ribonucleoside triphosphates as substrates. The chain is DNA-directed RNA polymerase subunit alpha from Lactobacillus delbrueckii subsp. bulgaricus (strain ATCC 11842 / DSM 20081 / BCRC 10696 / JCM 1002 / NBRC 13953 / NCIMB 11778 / NCTC 12712 / WDCM 00102 / Lb 14).